A 388-amino-acid polypeptide reads, in one-letter code: Deoxyguanosinetriphosphate triphosphohydrolase-like protein (388 aa).

Residues 1–32 are disordered; sequence MSVGMAAPRAPYSCDPDRSRGRLFAEPPSRTR. The HD domain maps to 69 to 205; sequence RLTHSLEVAQ…AALADDIAYD (137 aa).

It belongs to the dGTPase family. Type 2 subfamily.

This chain is Deoxyguanosinetriphosphate triphosphohydrolase-like protein, found in Bradyrhizobium sp. (strain ORS 278).